The primary structure comprises 339 residues: Anthranilate phosphoribosyltransferase (339 aa).

5-phospho-alpha-D-ribose 1-diphosphate contacts are provided by residues glycine 81, 84–85, serine 89, 91–94, 109–117, and alanine 121; these read GD, NVSS, and KHGNRALSS. Glycine 81 contributes to the anthranilate binding site. Mg(2+) is bound at residue serine 93. Residue asparagine 112 coordinates anthranilate. Arginine 167 lines the anthranilate pocket. Mg(2+)-binding residues include aspartate 225 and glutamate 226.

It belongs to the anthranilate phosphoribosyltransferase family. As to quaternary structure, homodimer. Requires Mg(2+) as cofactor.

The enzyme catalyses N-(5-phospho-beta-D-ribosyl)anthranilate + diphosphate = 5-phospho-alpha-D-ribose 1-diphosphate + anthranilate. Its pathway is amino-acid biosynthesis; L-tryptophan biosynthesis; L-tryptophan from chorismate: step 2/5. Catalyzes the transfer of the phosphoribosyl group of 5-phosphorylribose-1-pyrophosphate (PRPP) to anthranilate to yield N-(5'-phosphoribosyl)-anthranilate (PRA). The chain is Anthranilate phosphoribosyltransferase from Brucella suis biovar 1 (strain 1330).